Here is a 1129-residue protein sequence, read N- to C-terminus: Egg-laying defective protein 27 (1129 aa).

Over residues 1 to 11 the composition is skewed to polar residues; the sequence is MSRFDSQCSSE. Positions 1-43 are disordered; that stretch reads MSRFDSQCSSEDVNKEDECVPSSSEDSQDGVSSPMENDDEPEF. The segment covering 22 to 33 has biased composition (low complexity); sequence SSSEDSQDGVSS. The BAH domain maps to 87–223; that stretch reads TLYRLRDSVF…QDSTKLASTH (137 aa). In terms of domain architecture, ELM2 spans 224 to 327; the sequence is YAIRVGTSFQ…DALSELNAND (104 aa). The SANT domain occupies 332–384; sequence TDVDNMTQDDAKKFAKGIKQLGKNFSRIHRELLPHHSREQLVSYYYLWKKTPE. The tract at residues 388 to 434 is disordered; that stretch reads PKQAARRVNPTSIKRPTKEKVKASRPTSTEYLDFDSASESDVENNGP. Residues 419–429 show a composition bias toward acidic residues; the sequence is LDFDSASESDV. The GATA-type; atypical zinc finger occupies 439–485; sequence CHHCYGAESKDWHHANGLLLCTDCRLHYKKYGQLRQIANRPSQVPAC. Disordered regions lie at residues 488–636, 693–717, 790–814, 899–950, and 982–1040; these read KRSN…DPMP, RDETNGETNSDLKDDENVEPDSPED, QQNQIKKEQQQSQPTPQQIHQQQAQ, MIAE…HAAA, and MAAQ…REHA. Polar residues-rich tracts occupy residues 525-545 and 561-573; these read PSTVSNGAPNLTAEETPTKKL and VINNVEKSNSSEE. 2 stretches are compositionally biased toward acidic residues: residues 613–634 and 705–717; these read SYDDDDDEEEGKMTIDEGDDDP and KDDENVEPDSPED. Residues 899–914 show a composition bias toward low complexity; that stretch reads MIAEQQQQQRHAAAQQ. Positions 915–932 are enriched in basic and acidic residues; that stretch reads LREREQREQRERERERQH. Low complexity-rich tracts occupy residues 933 to 950 and 983 to 999; these read QQQAQQALHQQQQQHAAA and AAQQQQQQQQAAQAQAQ. The segment covering 1000–1040 has biased composition (basic and acidic residues); the sequence is RDQERERREREAREREAAREREREQAAREAAARDQAAREHA.

Interacts with ceh-6, sem-4 and sox-2. Interacts with wdr-5.1. As to expression, expression detected in anterior intestine and head region.

The protein localises to the nucleus. Its function is as follows. Transcription factor which promotes stress survival and delays aging. Required for cell cycle progression and development of the mesodermal and endodermal embryonic lineages. Required for normal T-cell polarity, for correct migration of QL neuroblast descendants and other cells, for embryonic patterning and for the embryonic expression of hlh-8. Also required for the transdifferentiation of the Y rectal epithelial cell to the PDA motor neuron during larval development. This chain is Egg-laying defective protein 27, found in Caenorhabditis elegans.